The primary structure comprises 459 residues: Cysteine--tRNA ligase (459 aa).

Cys-28 provides a ligand contact to Zn(2+). Residues 30 to 40 (VTVYDLCHIGH) carry the 'HIGH' region motif. Zn(2+) contacts are provided by Cys-209, His-234, and Glu-238. Positions 266-270 (KMSKS) match the 'KMSKS' region motif. Lys-269 contacts ATP.

This sequence belongs to the class-I aminoacyl-tRNA synthetase family. As to quaternary structure, monomer. It depends on Zn(2+) as a cofactor.

The protein resides in the cytoplasm. The enzyme catalyses tRNA(Cys) + L-cysteine + ATP = L-cysteinyl-tRNA(Cys) + AMP + diphosphate. This Shewanella oneidensis (strain ATCC 700550 / JCM 31522 / CIP 106686 / LMG 19005 / NCIMB 14063 / MR-1) protein is Cysteine--tRNA ligase.